Consider the following 512-residue polypeptide: Cytochrome P450 72A15 (512 aa).

The helical transmembrane segment at 2–22 threads the bilayer; the sequence is EISVASVTISVVLAVVSWWIW. C460 contacts heme.

It belongs to the cytochrome P450 family. Heme is required as a cofactor.

It is found in the membrane. The sequence is that of Cytochrome P450 72A15 (CYP72A15) from Arabidopsis thaliana (Mouse-ear cress).